The following is a 378-amino-acid chain: Ribosomal RNA large subunit methyltransferase G (378 aa).

Belongs to the methyltransferase superfamily. RlmG family.

The protein resides in the cytoplasm. The enzyme catalyses guanosine(1835) in 23S rRNA + S-adenosyl-L-methionine = N(2)-methylguanosine(1835) in 23S rRNA + S-adenosyl-L-homocysteine + H(+). Specifically methylates the guanine in position 1835 (m2G1835) of 23S rRNA. The polypeptide is Ribosomal RNA large subunit methyltransferase G (Shigella flexneri).